A 611-amino-acid chain; its full sequence is Threonine--tRNA ligase (611 aa).

The disordered stretch occupies residues 1–25 (MAGPDRKPVSSAAATTPAPSAPVVL). The span at 9–24 (VSSAAATTPAPSAPVV) shows a compositional bias: low complexity. The interval 209–502 (DHRRIGKDLD…MTENYAGDYP (294 aa)) is catalytic. Residues C302, H353, and H479 each coordinate Zn(2+).

The protein belongs to the class-II aminoacyl-tRNA synthetase family. As to quaternary structure, homodimer. Zn(2+) is required as a cofactor.

It localises to the cytoplasm. The catalysed reaction is tRNA(Thr) + L-threonine + ATP = L-threonyl-tRNA(Thr) + AMP + diphosphate + H(+). Functionally, catalyzes the attachment of threonine to tRNA(Thr) in a two-step reaction: L-threonine is first activated by ATP to form Thr-AMP and then transferred to the acceptor end of tRNA(Thr). Also edits incorrectly charged L-seryl-tRNA(Thr). The sequence is that of Threonine--tRNA ligase from Parasynechococcus marenigrum (strain WH8102).